The chain runs to 293 residues: Ribosomal protein L11 methyltransferase (293 aa).

S-adenosyl-L-methionine is bound by residues Thr145, Gly166, Asp188, and Asn230.

The protein belongs to the methyltransferase superfamily. PrmA family.

The protein localises to the cytoplasm. The enzyme catalyses L-lysyl-[protein] + 3 S-adenosyl-L-methionine = N(6),N(6),N(6)-trimethyl-L-lysyl-[protein] + 3 S-adenosyl-L-homocysteine + 3 H(+). Methylates ribosomal protein L11. The polypeptide is Ribosomal protein L11 methyltransferase (Shewanella sp. (strain ANA-3)).